The sequence spans 147 residues: Large ribosomal subunit protein bL9 (147 aa).

The protein belongs to the bacterial ribosomal protein bL9 family.

Functionally, binds to the 23S rRNA. This Bacteroides fragilis (strain YCH46) protein is Large ribosomal subunit protein bL9.